We begin with the raw amino-acid sequence, 124 residues long: uncharacterized protein (124 aa).

3 consecutive transmembrane segments (helical) span residues 13-33, 43-63, and 71-91; these read LIQI…VLQL, GLFW…PEFF, and GVGR…FYLI.

It to M.thermoautotrophicum MTH137.

The protein resides in the cell membrane. This is an uncharacterized protein from Methanocaldococcus jannaschii (strain ATCC 43067 / DSM 2661 / JAL-1 / JCM 10045 / NBRC 100440) (Methanococcus jannaschii).